Consider the following 1027-residue polypeptide: Pro-apoptotic serine protease nma111 (1027 aa).

Positions 1–46 (MDLNGDAGAKRKRSSIVPAERPAKHLKPESSALTPGDSTPANGTVY) are disordered. The span at 31–42 (SALTPGDSTPAN) shows a compositional bias: polar residues. The serine protease stretch occupies residues 81–265 (VVSIHFCQTC…AATDYFLPLD (185 aa)). Residues histidine 119, aspartate 150, and serine 232 each act as charge relay system in the active site. PDZ domains follow at residues 288–373 (QWIL…LLVQ) and 875–956 (VFCG…VTFD). The interval 991-1027 (HNKSKHKDGIAPDAANLNPDAMEQGYDGASDIEPEAE) is disordered.

This sequence belongs to the peptidase S1C family.

Its subcellular location is the nucleus. Its function is as follows. Nuclear serine protease which mediates apoptosis. This is Pro-apoptotic serine protease nma111 (nma111) from Aspergillus oryzae (strain ATCC 42149 / RIB 40) (Yellow koji mold).